Reading from the N-terminus, the 98-residue chain is NADH-ubiquinone oxidoreductase chain 4L (98 aa).

Transmembrane regions (helical) follow at residues 1–21 (MPVV…GLLV), 29–49 (SLLC…VTVL), and 61–81 (IILL…LVMV).

It belongs to the complex I subunit 4L family. As to quaternary structure, core subunit of respiratory chain NADH dehydrogenase (Complex I) which is composed of 45 different subunits.

The protein localises to the mitochondrion inner membrane. The enzyme catalyses a ubiquinone + NADH + 5 H(+)(in) = a ubiquinol + NAD(+) + 4 H(+)(out). Its function is as follows. Core subunit of the mitochondrial membrane respiratory chain NADH dehydrogenase (Complex I) which catalyzes electron transfer from NADH through the respiratory chain, using ubiquinone as an electron acceptor. Part of the enzyme membrane arm which is embedded in the lipid bilayer and involved in proton translocation. The polypeptide is NADH-ubiquinone oxidoreductase chain 4L (MT-ND4L) (Ursus arctos (Brown bear)).